The primary structure comprises 300 residues: 7-methylguanosine phosphate-specific 5'-nucleotidase (300 aa).

D41 acts as the Nucleophile in catalysis. Mg(2+)-binding residues include D41 and D43. D43 functions as the Proton donor in the catalytic mechanism. Residue E88 coordinates CMP. N(7)-methyl-GMP is bound at residue E88. Substrate is bound by residues 156 to 157 (SA) and K205. A Mg(2+)-binding site is contributed by D230. The residue at position 256 (K256) is an N6-acetyllysine.

It belongs to the pyrimidine 5'-nucleotidase family. In terms of assembly, monomer.

The protein localises to the cytoplasm. It catalyses the reaction N(7)-methyl-GMP + H2O = N(7)-methylguanosine + phosphate. The enzyme catalyses CMP + H2O = cytidine + phosphate. It carries out the reaction a ribonucleoside 5'-phosphate + H2O = a ribonucleoside + phosphate. In terms of biological role, specifically hydrolyzes 7-methylguanosine monophosphate (m(7)GMP) to 7-methylguanosine and inorganic phosphate. The specific activity for m(7)GMP may protect cells against undesired salvage of m(7)GMP and its incorporation into nucleic acids. Also has weak activity for CMP. UMP and purine nucleotides are poor substrates. In Mus musculus (Mouse), this protein is 7-methylguanosine phosphate-specific 5'-nucleotidase (Nt5c3b).